A 310-amino-acid polypeptide reads, in one-letter code: Elongation factor Ts, mitochondrial (310 aa).

Residues 1–42 constitute a mitochondrion transit peptide; the sequence is MGFQVLRSVIQAPLAKRSFLCKSCPSGLRVLYNNILLSSRSY.

This sequence belongs to the EF-Ts family.

It is found in the mitochondrion. Associates with the EF-Tu.GDP complex and induces the exchange of GDP to GTP. It remains bound to the aminoacyl-tRNA.EF-Tu.GTP complex up to the GTP hydrolysis stage on the ribosome. The chain is Elongation factor Ts, mitochondrial (tsf1) from Schizosaccharomyces japonicus (strain yFS275 / FY16936) (Fission yeast).